The primary structure comprises 715 residues: Transcription activator of gluconeogenesis MGYG_02011 (715 aa).

The span at 1–14 shows a compositional bias: polar residues; that stretch reads MSPHQTTGQESDNM. The tract at residues 1-28 is disordered; it reads MSPHQTTGQESDNMAVNGENAPASSQYI. The zn(2)-C6 fungal-type DNA-binding region spans 66 to 94; that stretch reads CYACQRGHLTCGDERPCQRCIKRGFQDAC. 4 stretches are compositionally biased toward polar residues: residues 129–166, 179–191, 203–223, and 362–385; these read QNNV…PQNK, YASQ…TYQI, SLPQ…GQFN, and MMTT…RPNA. 4 disordered regions span residues 129–223, 354–414, 534–569, and 628–663; these read QNNV…GQFN, SPAS…RRRH, NHNV…NSST, and GSNG…NGRG. Positions 386 to 400 are enriched in low complexity; it reads SVSQQRQQPVVSTPQ. Composition is skewed to polar residues over residues 535-554 and 639-649; these read HNVN…SRGS and GEASSSEANEL. Residues 650-662 show a composition bias toward low complexity; that stretch reads NGSNANGATTNGR.

The protein belongs to the ERT1/acuK family.

It is found in the nucleus. Functionally, transcription factor which regulates nonfermentable carbon utilization. Activator of gluconeogenetic genes. In Arthroderma gypseum (strain ATCC MYA-4604 / CBS 118893) (Microsporum gypseum), this protein is Transcription activator of gluconeogenesis MGYG_02011.